Consider the following 257-residue polypeptide: 4-chloro-allylglycine synthase (257 aa).

E112, H119, E173, H203, E207, and H210 together coordinate Fe cation.

The cofactor is Fe(2+).

It catalyses the reaction 4-chloro-L-lysine + AH2 + O2 = L-2-amino-4-chloropent-4-enoate + formaldehyde + A + NH4(+) + H2O. It participates in amino-acid metabolism. Its pathway is antibiotic biosynthesis. Its function is as follows. Involved in the biosynthesis of terminal alkyne-containing amino acids such as L-propargylglycine (Pra) and L-beta-ethynylserine, that are produced as antibiotics by S.cattleya. Catalyzes an oxidative C-C bond cleavage in 4-chloro-L-lysine to form 4-chloro-allyl-L-glycine (also named L-2-amino-4-chloropent-4-enoate), with release of formaldehyde and ammonia. Is also able to react with L-lysine directly to produce allylglycine in vitro. The polypeptide is 4-chloro-allylglycine synthase (Streptantibioticus cattleyicolor (strain ATCC 35852 / DSM 46488 / JCM 4925 / NBRC 14057 / NRRL 8057) (Streptomyces cattleya)).